The primary structure comprises 203 residues: MYIGRFLVVGKTQQGKPFVSYRVSSRSFPNRKAVINNTNDTVAILPNDLNDMFANPYIAYNCIKIVGNTVIATNGTHTDIIADKIKLELPIRDALALSLIAMDYEKDDYNTPRIAVVLNENTAYMGYVADNDIRIKEVPLKDGLAYYLSTYECCRISTEHQNIVVDGENPEEICKFVMDYEKFEKPVCCATATIDGDIELGTL.

This sequence belongs to the archaeal IMP cyclohydrolase family.

The catalysed reaction is IMP + H2O = 5-formamido-1-(5-phospho-D-ribosyl)imidazole-4-carboxamide. Its pathway is purine metabolism; IMP biosynthesis via de novo pathway; IMP from 5-formamido-1-(5-phospho-D-ribosyl)imidazole-4-carboxamide: step 1/1. Functionally, catalyzes the cyclization of 5-formylamidoimidazole-4-carboxamide ribonucleotide to IMP. In Methanococcus aeolicus (strain ATCC BAA-1280 / DSM 17508 / OCM 812 / Nankai-3), this protein is IMP cyclohydrolase.